The chain runs to 37 residues: MKVRVSVKPICEKCKVIKRKGVLRIICDNLKHKQRQK.

This sequence belongs to the bacterial ribosomal protein bL36 family.

The chain is Large ribosomal subunit protein bL36 from Borreliella burgdorferi (strain ATCC 35210 / DSM 4680 / CIP 102532 / B31) (Borrelia burgdorferi).